Here is a 354-residue protein sequence, read N- to C-terminus: MPHPDDFSLDAYDYQLPPERIAQQPVSPRDRSRLMVVTRDTAADHYFYELPQLLAPGDLLVLNDTRVIPARLIGQKVGAAGRTVEVFLLEELSDRQWLALVKPGRKLRPGAVIQIGPLQATVQTIDEETRGRVIEFDLPPGDRLWSYLDHLGEVPLPPYIDHPLADTEQYQTVYARRPGAVAAPTAGLHFTPELFSKLADRGIDHCFLTLHVGIGTFRPVEAKDIRHHHLHEEWLEVSAATVERIQAAKAAGGRIIAVGTTVIRALETAAHSGTLQPFCGKSDLYIYPGYQPKIVEGFITNFHLPRSSLMMLVSAFIGRERLLQLYQQAIDRQYRFYSFGDAMLILPSACHNTL.

This sequence belongs to the QueA family. As to quaternary structure, monomer.

Its subcellular location is the cytoplasm. The catalysed reaction is 7-aminomethyl-7-carbaguanosine(34) in tRNA + S-adenosyl-L-methionine = epoxyqueuosine(34) in tRNA + adenine + L-methionine + 2 H(+). Its pathway is tRNA modification; tRNA-queuosine biosynthesis. Functionally, transfers and isomerizes the ribose moiety from AdoMet to the 7-aminomethyl group of 7-deazaguanine (preQ1-tRNA) to give epoxyqueuosine (oQ-tRNA). The polypeptide is S-adenosylmethionine:tRNA ribosyltransferase-isomerase (Thermosynechococcus vestitus (strain NIES-2133 / IAM M-273 / BP-1)).